A 229-amino-acid polypeptide reads, in one-letter code: Ribonuclease HII (229 aa).

The 190-residue stretch at 34 to 223 folds into the RNase H type-2 domain; the sequence is WPVAGADEAG…LRKTENGPET (190 aa). The a divalent metal cation site is built by Asp40, Glu41, and Asp131. Residues 209–229 are disordered; sequence MSFRPLRKTENGPETDELLSE.

It belongs to the RNase HII family. Mn(2+) is required as a cofactor. It depends on Mg(2+) as a cofactor.

Its subcellular location is the cytoplasm. The enzyme catalyses Endonucleolytic cleavage to 5'-phosphomonoester.. In terms of biological role, endonuclease that specifically degrades the RNA of RNA-DNA hybrids. In Rhizobium johnstonii (strain DSM 114642 / LMG 32736 / 3841) (Rhizobium leguminosarum bv. viciae), this protein is Ribonuclease HII.